Here is a 143-residue protein sequence, read N- to C-terminus: Sirohydrochlorin cobaltochelatase (143 aa).

Histidine 18 (proton acceptor) is an active-site residue. Histidine 18 lines the Co(2+) pocket. Histidine 18 contributes to the Ni(2+) binding site. Substrate is bound by residues arginine 53 and 78 to 83; that span reads LAHGVH. Histidine 83 contacts Co(2+). Histidine 83 lines the Ni(2+) pocket.

The protein belongs to the CbiX family. CbiXS subfamily. Homotetramer; dimer of dimers.

The enzyme catalyses Co-sirohydrochlorin + 2 H(+) = sirohydrochlorin + Co(2+). It carries out the reaction Ni-sirohydrochlorin + 2 H(+) = sirohydrochlorin + Ni(2+). It participates in cofactor biosynthesis; adenosylcobalamin biosynthesis; cob(II)yrinate a,c-diamide from sirohydrochlorin (anaerobic route): step 1/10. Catalyzes the insertion of Co(2+) into sirohydrochlorin as part of the anaerobic pathway to cobalamin biosynthesis. Involved in the biosynthesis of the unique nickel-containing tetrapyrrole coenzyme F430, the prosthetic group of methyl-coenzyme M reductase (MCR), which plays a key role in methanogenesis and anaerobic methane oxidation (Potential). Catalyzes the insertion of Ni(2+) into sirohydrochlorin to yield Ni-sirohydrochlorin (Potential). In Methanothermobacter thermautotrophicus (strain ATCC 29096 / DSM 1053 / JCM 10044 / NBRC 100330 / Delta H) (Methanobacterium thermoautotrophicum), this protein is Sirohydrochlorin cobaltochelatase.